We begin with the raw amino-acid sequence, 534 residues long: Arginine--tRNA ligase (534 aa).

Residues 120–130 carry the 'HIGH' region motif; it reads ANPTGFLHLGH.

It belongs to the class-I aminoacyl-tRNA synthetase family. As to quaternary structure, monomer.

It localises to the cytoplasm. The catalysed reaction is tRNA(Arg) + L-arginine + ATP = L-arginyl-tRNA(Arg) + AMP + diphosphate. In Mesomycoplasma hyopneumoniae (strain J / ATCC 25934 / NCTC 10110) (Mycoplasma hyopneumoniae), this protein is Arginine--tRNA ligase.